A 217-amino-acid polypeptide reads, in one-letter code: External core antigen (217 aa).

Residues 1 to 20 (MYLFHLCLVFACVSCPTVQA) form the signal peptide. The tract at residues 26-28 (GWL) is HBEAG. The span at 181–210 (RRGSARVVRSPRRRTPSPRRRRSQSPRRRP) shows a compositional bias: basic residues. The tract at residues 181–217 (RRGSARVVRSPRRRTPSPRRRRSQSPRRRPQSPASNC) is disordered. The stretch at 190–196 (SPRRRTP) is one 1; half-length repeat. The interval 190 to 211 (SPRRRTPSPRRRRSQSPRRRPQ) is 3 X 8 AA approximate repeats of S-P-R-R-R-R-[PS]-Q. The propeptide occupies 190–217 (SPRRRTPSPRRRRSQSPRRRPQSPASNC). A run of 2 repeats spans residues 197-204 (SPRRRRSQ) and 205-211 (SPRRRPQ).

This sequence belongs to the orthohepadnavirus precore antigen family. As to quaternary structure, homodimerizes. In terms of processing, phosphorylated. Post-translationally, cleaved by host furin.

It is found in the secreted. The protein resides in the host nucleus. In terms of biological role, may regulate immune response to the intracellular capsid in acting as a T-cell tolerogen, by having an immunoregulatory effect which prevents destruction of infected cells by cytotoxic T-cells. This immune regulation may predispose to chronicity during perinatal infections and prevent severe liver injury during adult infections. The protein is External core antigen of Urocitellus parryii kennicottii (ASHV).